We begin with the raw amino-acid sequence, 658 residues long: Exoribonuclease 2 (658 aa).

One can recognise an RNB domain in the interval arginine 189 to leucine 530. The S1 motif domain occupies alanine 576 to isoleucine 658.

This sequence belongs to the RNR ribonuclease family. RNase II subfamily.

It localises to the cytoplasm. The catalysed reaction is Exonucleolytic cleavage in the 3'- to 5'-direction to yield nucleoside 5'-phosphates.. Its function is as follows. Involved in mRNA degradation. Hydrolyzes single-stranded polyribonucleotides processively in the 3' to 5' direction. This Actinobacillus pleuropneumoniae serotype 5b (strain L20) protein is Exoribonuclease 2.